Reading from the N-terminus, the 773-residue chain is DNA gyrase subunit B (773 aa).

Residues 416–530 (SEIFLVEGDS…QGHVFIAQAP (115 aa)) enclose the Toprim domain. Residues E422, D495, and D497 each coordinate Mg(2+).

This sequence belongs to the type II topoisomerase GyrB family. In terms of assembly, heterotetramer, composed of two GyrA and two GyrB chains. In the heterotetramer, GyrA contains the active site tyrosine that forms a transient covalent intermediate with DNA, while GyrB binds cofactors and catalyzes ATP hydrolysis. Mg(2+) is required as a cofactor. It depends on Mn(2+) as a cofactor. The cofactor is Ca(2+).

The protein localises to the cytoplasm. It catalyses the reaction ATP-dependent breakage, passage and rejoining of double-stranded DNA.. A type II topoisomerase that negatively supercoils closed circular double-stranded (ds) DNA in an ATP-dependent manner to modulate DNA topology and maintain chromosomes in an underwound state. Negative supercoiling favors strand separation, and DNA replication, transcription, recombination and repair, all of which involve strand separation. Also able to catalyze the interconversion of other topological isomers of dsDNA rings, including catenanes and knotted rings. Type II topoisomerases break and join 2 DNA strands simultaneously in an ATP-dependent manner. This Helicobacter pylori (strain J99 / ATCC 700824) (Campylobacter pylori J99) protein is DNA gyrase subunit B.